A 118-amino-acid polypeptide reads, in one-letter code: MSQGLTAYRNVLRAANLAFKNDHFVLGQAKANIRKGFEDGRKLDPKDEDVKVRLEHINGVAYVLRTQVVQGQKHNPDEEKYQLNLHKDSEMGDNESIKSPPPMPTKGKKGKKVKCCSE.

Residues 70 to 118 (QGQKHNPDEEKYQLNLHKDSEMGDNESIKSPPPMPTKGKKGKKVKCCSE) are disordered. Positions 74 to 90 (HNPDEEKYQLNLHKDSE) are enriched in basic and acidic residues. Residues 106–118 (KGKKGKKVKCCSE) show a composition bias toward basic residues.

It belongs to the complex I LYR family. MZM1 subfamily. In terms of assembly, interacts with RIP1.

It localises to the mitochondrion matrix. Its function is as follows. Assembly factor required for Rieske Fe-S protein RIP1 incorporation into the cytochrome b-c1 (CIII) complex. Functions as a chaperone, binding to this subunit within the mitochondrial matrix and stabilizing it prior to its translocation and insertion into the late CIII dimeric intermediate within the mitochondrial inner membrane. Modulates the mitochondrial matrix zinc pool. The sequence is that of Mitochondrial zinc maintenance protein 1, mitochondrial (MZM1) from Yarrowia lipolytica (strain CLIB 122 / E 150) (Yeast).